The chain runs to 89 residues: Small ribosomal subunit protein uS14A (89 aa).

The interval 34-54 is disordered; the sequence is ESLRKLPRDSNPNRLKNRDKI.

This sequence belongs to the universal ribosomal protein uS14 family. Part of the 30S ribosomal subunit. Contacts proteins S3 and S10.

Functionally, binds 16S rRNA, required for the assembly of 30S particles and may also be responsible for determining the conformation of the 16S rRNA at the A site. The chain is Small ribosomal subunit protein uS14A from Streptococcus pyogenes serotype M1.